The primary structure comprises 231 residues: Uracil-DNA glycosylase (231 aa).

Residue D74 is the Proton acceptor of the active site.

Belongs to the uracil-DNA glycosylase (UDG) superfamily. UNG family.

The protein localises to the cytoplasm. The catalysed reaction is Hydrolyzes single-stranded DNA or mismatched double-stranded DNA and polynucleotides, releasing free uracil.. Its function is as follows. Excises uracil residues from the DNA which can arise as a result of misincorporation of dUMP residues by DNA polymerase or due to deamination of cytosine. This chain is Uracil-DNA glycosylase, found in Campylobacter jejuni subsp. doylei (strain ATCC BAA-1458 / RM4099 / 269.97).